Here is a 481-residue protein sequence, read N- to C-terminus: Vanillin dehydrogenase (481 aa).

Residue 228–233 (GSTHVG) participates in NAD(+) binding. Active-site residues include Glu-250 and Cys-284.

This sequence belongs to the aldehyde dehydrogenase family.

It catalyses the reaction vanillin + NAD(+) + H2O = vanillate + NADH + 2 H(+). Its function is as follows. Catalyzes the NAD-dependent oxidation of vanillin to vanillic acid. This chain is Vanillin dehydrogenase (vdh), found in Pseudomonas sp. (strain HR199 / DSM 7063).